The sequence spans 311 residues: Ketoisovalerate oxidoreductase subunit VorB (311 aa).

As to quaternary structure, heterotetramer of one alpha, one beta, one delta and one gamma chain.

It carries out the reaction 3-methyl-2-oxobutanoate + 2 oxidized [2Fe-2S]-[ferredoxin] + CoA = 2-methylpropanoyl-CoA + 2 reduced [2Fe-2S]-[ferredoxin] + CO2 + H(+). The chain is Ketoisovalerate oxidoreductase subunit VorB (vorB) from Pyrococcus furiosus (strain ATCC 43587 / DSM 3638 / JCM 8422 / Vc1).